The chain runs to 226 residues: tRNA (guanine-N(1)-)-methyltransferase (226 aa).

Residues glycine 112 and isoleucine 132–leucine 137 each bind S-adenosyl-L-methionine.

Belongs to the RNA methyltransferase TrmD family. As to quaternary structure, homodimer.

It is found in the cytoplasm. It carries out the reaction guanosine(37) in tRNA + S-adenosyl-L-methionine = N(1)-methylguanosine(37) in tRNA + S-adenosyl-L-homocysteine + H(+). Its function is as follows. Specifically methylates guanosine-37 in various tRNAs. This is tRNA (guanine-N(1)-)-methyltransferase from Christiangramia forsetii (strain DSM 17595 / CGMCC 1.15422 / KT0803) (Gramella forsetii).